A 945-amino-acid chain; its full sequence is Xylanolytic transcriptional activator xlnR (945 aa).

Residues 1–23 (MSTPSIPQFTSSFSPFSSGSHST) are compositionally biased toward low complexity. Disordered stretches follow at residues 1-32 (MSTP…QTVG) and 53-118 (AAGT…APVR). The segment covering 73–84 (HTKDQPPFDNEK) has biased composition (basic and acidic residues). The segment at residues 125 to 151 (CDQCNQLRTKCDGQHPCAHCIEFGLTC) is a DNA-binding region (zn(2)-C6 fungal-type). Disordered regions lie at residues 172–210 (AAAA…GTYD) and 559–601 (PPNV…INVT). The segment covering 176-188 (TQGSNGHSGQANA) has biased composition (polar residues). Positions 565–581 (ARQDGERDGDGEADKRH) are enriched in basic and acidic residues.

The protein belongs to the xlnR/xlr1 family.

The protein resides in the nucleus. Its function is as follows. Transcriptional activator of the xylanolytic system. Involved in the regulation of extracellular cellulolytic and xylanolytic genes and in the regulation of the intracellular activities of D-xylose catabolic genes in the pentose catabolic pathway (PCP) in response to the presence of D-xylose. Binds to the DNA sequence 5'-GGNTAAA-3'. The sequence is that of Xylanolytic transcriptional activator xlnR (xlnR) from Aspergillus niger.